A 455-amino-acid polypeptide reads, in one-letter code: Bifunctional protein GlmU (455 aa).

The segment at methionine 1 to glycine 229 is pyrophosphorylase. Residues leucine 11–glycine 14, lysine 25, glutamine 76, glycine 81–threonine 82, tyrosine 103–aspartate 105, glycine 140, glutamate 154, asparagine 169, and asparagine 227 contribute to the UDP-N-acetyl-alpha-D-glucosamine site. Aspartate 105 lines the Mg(2+) pocket. Mg(2+) is bound at residue asparagine 227. Positions leucine 230–serine 250 are linker. The N-acetyltransferase stretch occupies residues glycine 251–threonine 455. Arginine 333 and lysine 351 together coordinate UDP-N-acetyl-alpha-D-glucosamine. Histidine 363 functions as the Proton acceptor in the catalytic mechanism. 2 residues coordinate UDP-N-acetyl-alpha-D-glucosamine: tyrosine 366 and asparagine 377. Residues alanine 380, asparagine 386–tyrosine 387, serine 405, alanine 423, and arginine 440 contribute to the acetyl-CoA site.

It in the N-terminal section; belongs to the N-acetylglucosamine-1-phosphate uridyltransferase family. The protein in the C-terminal section; belongs to the transferase hexapeptide repeat family. As to quaternary structure, homotrimer. It depends on Mg(2+) as a cofactor.

The protein resides in the cytoplasm. It carries out the reaction alpha-D-glucosamine 1-phosphate + acetyl-CoA = N-acetyl-alpha-D-glucosamine 1-phosphate + CoA + H(+). It catalyses the reaction N-acetyl-alpha-D-glucosamine 1-phosphate + UTP + H(+) = UDP-N-acetyl-alpha-D-glucosamine + diphosphate. Its pathway is nucleotide-sugar biosynthesis; UDP-N-acetyl-alpha-D-glucosamine biosynthesis; N-acetyl-alpha-D-glucosamine 1-phosphate from alpha-D-glucosamine 6-phosphate (route II): step 2/2. It participates in nucleotide-sugar biosynthesis; UDP-N-acetyl-alpha-D-glucosamine biosynthesis; UDP-N-acetyl-alpha-D-glucosamine from N-acetyl-alpha-D-glucosamine 1-phosphate: step 1/1. It functions in the pathway bacterial outer membrane biogenesis; LPS lipid A biosynthesis. In terms of biological role, catalyzes the last two sequential reactions in the de novo biosynthetic pathway for UDP-N-acetylglucosamine (UDP-GlcNAc). The C-terminal domain catalyzes the transfer of acetyl group from acetyl coenzyme A to glucosamine-1-phosphate (GlcN-1-P) to produce N-acetylglucosamine-1-phosphate (GlcNAc-1-P), which is converted into UDP-GlcNAc by the transfer of uridine 5-monophosphate (from uridine 5-triphosphate), a reaction catalyzed by the N-terminal domain. This chain is Bifunctional protein GlmU, found in Hamiltonella defensa subsp. Acyrthosiphon pisum (strain 5AT).